A 313-amino-acid polypeptide reads, in one-letter code: Intelectin-like protein (313 aa).

The Fibrinogen C-terminal domain occupies 33–251 (TSCCSQTSPG…NNEKAPMALC (219 aa)). Residues H86, E87, N89, G92, G97, D98, and D133 each contribute to the Ca(2+) site. 3 cysteine pairs are disulfide-bonded: C94/C280, C199/C259, and C251/C265. N260, E262, E274, and D282 together coordinate Ca(2+). Residues 262–263 (EH) and E274 contribute to the a carbohydrate site.

As to quaternary structure, monomer, homodimer, homotrimer and homotetramer. Mostly monomeric or dimeric.

The protein localises to the secreted. Its function is as follows. Binds mannan, mannose and, to a lesser degree, D-lactose, N-acetylgalactosamine, N-acetylglucosamine and beta-D-glucose. This Alligator mississippiensis (American alligator) protein is Intelectin-like protein.